Here is a 1093-residue protein sequence, read N- to C-terminus: Atos homolog protein A (1093 aa).

The interval 29-37 (ALLITEGRT) is transactivation domain 1 (TAD1). Disordered regions lie at residues 396-479 (AGRP…GNPL), 558-579 (SSKS…GESK), and 746-788 (HDNF…GSMR). A compositionally biased stretch (basic and acidic residues) spans 746 to 763 (HDNFKNKNRQDKTKAAHD). The segment at 895 to 952 (LLGNFEESVLNFRLDPLGIVEGFTAEVGASGVFCPTHMTLPVEVSFYSVSDDNAPSPY) is required for macropage invasion. The transactivation domain 2 (TAD2) stretch occupies residues 979–987 (FNPNKTVVK).

It belongs to the ATOS family.

It localises to the nucleus. Transcription regulator that syncronizes transcriptional and translational programs to promote macrophage invasion of tissues. The sequence is that of Atos homolog protein A (ATOSA) from Gallus gallus (Chicken).